Consider the following 538-residue polypeptide: Carboxypeptidase 2 (538 aa).

Residues 1 to 21 (MVAYRFLTLISLGLGSHCASA) form the signal peptide. Asparagine 46 is a glycosylation site (N-linked (GlcNAc...) asparagine). Residues 53-76 (PAFTSPGTVPRGFSDGTSGPTRDE) form a disordered region. The 281-residue stretch at 71 to 351 (GPTRDETMEG…VMVKSILQTA (281 aa)) folds into the Peptidase M14 domain. Residues histidine 136, glutamate 139, and histidine 224 each coordinate Zn(2+). Glutamate 322 functions as the Proton donor/acceptor in the catalytic mechanism. Residues asparagine 393 and asparagine 459 are each glycosylated (N-linked (GlcNAc...) asparagine).

The protein belongs to the peptidase M14 family. Zn(2+) is required as a cofactor.

It is found in the secreted. Extracellular metalloprotease that contributes to pathogenicity. The chain is Carboxypeptidase 2 (MCPB) from Trichophyton equinum (Horse ringworm fungus).